Consider the following 177-residue polypeptide: MTESNILLTGKPGIGKTTVIKRTVELLSCSSTGFYTREIKRGDPRVGFEIISLQTGERLPLAHTDFTTAEDRVGKYGVKAENLLGFLKEINEAMTSNKPQCLVIDEIGKMEFFTPGFHETVDKAFQSSYPLLATIMKKSHKFCDYLKNRGDTDVIEVTENNRDDLPEKLAKRIEEQL.

ATP-binding positions include Gly-10–Thr-17 and Cys-101–Gly-108.

This sequence belongs to the THEP1 NTPase family.

The catalysed reaction is a ribonucleoside 5'-triphosphate + H2O = a ribonucleoside 5'-diphosphate + phosphate + H(+). Functionally, has nucleotide phosphatase activity towards ATP, GTP, CTP, TTP and UTP. May hydrolyze nucleoside diphosphates with lower efficiency. The protein is Nucleoside-triphosphatase THEP1 of Natranaerobius thermophilus (strain ATCC BAA-1301 / DSM 18059 / JW/NM-WN-LF).